The primary structure comprises 230 residues: Protein GrpE (230 aa).

2 disordered regions span residues methionine 1–lysine 28 and glycine 209–alanine 230. A compositionally biased stretch (polar residues) spans asparagine 221–alanine 230.

Belongs to the GrpE family. Homodimer.

It is found in the cytoplasm. In terms of biological role, participates actively in the response to hyperosmotic and heat shock by preventing the aggregation of stress-denatured proteins, in association with DnaK and GrpE. It is the nucleotide exchange factor for DnaK and may function as a thermosensor. Unfolded proteins bind initially to DnaJ; upon interaction with the DnaJ-bound protein, DnaK hydrolyzes its bound ATP, resulting in the formation of a stable complex. GrpE releases ADP from DnaK; ATP binding to DnaK triggers the release of the substrate protein, thus completing the reaction cycle. Several rounds of ATP-dependent interactions between DnaJ, DnaK and GrpE are required for fully efficient folding. This is Protein GrpE from Brucella ovis (strain ATCC 25840 / 63/290 / NCTC 10512).